A 354-amino-acid chain; its full sequence is MPEKLQLLLDRIKPASRSLSDAARAHLDDLTKPQGSLGRLEEIALKYVLATGNLSPLLSKKKICCFAADHGVAAEGVSAFPAEVTPQMVYNMLGGGAAINVLTRHAGVDLDVVDMGVNHDFPDLAGLVKRKVQPGSANMATGPAMSEEDALQALLCGAELAAEAQEAGYHLLGTGEMGIANTTPATALYAVLLDVSVESITGRGTGIDDERLLHKIAVIKQAIAVNGSRCTTPFATLAALGGYEIAAIAGFILGAAAARTPVVVDGFISSAGAVVALKLCPAVEDYLFFSHLSNEQGHRAVMEKLGARPILDLDLRLGEGTGAAIAMQLIEGAVKIYNEMATFSAARVSEKSGE.

Residue Glu-319 is the Proton acceptor of the active site.

The protein belongs to the CobT family.

The catalysed reaction is 5,6-dimethylbenzimidazole + nicotinate beta-D-ribonucleotide = alpha-ribazole 5'-phosphate + nicotinate + H(+). The protein operates within nucleoside biosynthesis; alpha-ribazole biosynthesis; alpha-ribazole from 5,6-dimethylbenzimidazole: step 1/2. In terms of biological role, catalyzes the synthesis of alpha-ribazole-5'-phosphate from nicotinate mononucleotide (NAMN) and 5,6-dimethylbenzimidazole (DMB). This chain is Nicotinate-nucleotide--dimethylbenzimidazole phosphoribosyltransferase, found in Pelodictyon phaeoclathratiforme (strain DSM 5477 / BU-1).